A 606-amino-acid chain; its full sequence is MSDQNLDIQQDHQKYVESLGDWARTNTCGELNANAIGSEVCLMGWVQFRRDHGGLIFIDLRDRSGLTQVVFSPDVSVDAHERAHVLRSEYVLAVRGTVRPRPEGMVNPNMKTGEVEVYVSEWKLLNTSKTPPFQVEDRVEASENLRLEYRYLDLRRPRLARNFQLRHRATQAIRNYLDQLNFLEVETPYLTKSTPEGARDFLVPSRMNQGEFYALPQSPQIFKQLLMVAGMDRYYQIVRCFRDEDLRADRQPEFTQVDIEMSFVDEERVQSMAEGLMARVFKETLGIDVALPFPRMPYDQAIAEYGLDKPDTRFDLRLKDVTDILRGSGFRLFAKAELVKAMRVPGGAVLSRKEIDDFTEFVKVYGAQGLAWIKIKEDEWQSPIAKFLSDDERAALTTELGLETGDIVFFQAASPDVVNNSLGYLRLKVADRFGLIPENSYNFLWVTDFPLFEYSPEDKRYVACHHPFTAPQVGHEELMVSDPAKARARAYDLVLNGNEVGGGSIRIHSREAQEHMFRALGFDPQEAEEQFGFLMQALELGAPPHGGIAFGMDRLVMLLAGSASIRDVIAFPKTQKATCLMTHAPDQVAAKQLRELGIRLREKQEA.

Glu196 provides a ligand contact to L-aspartate. Residues 220-223 (QIFK) are aspartate. Residue Arg242 participates in L-aspartate binding. ATP-binding positions include 242-244 (RDE) and Gln251. His465 is an L-aspartate binding site. Glu499 lines the ATP pocket. Arg506 is a binding site for L-aspartate. Residue 551–554 (GMDR) coordinates ATP.

The protein belongs to the class-II aminoacyl-tRNA synthetase family. Type 1 subfamily. In terms of assembly, homodimer.

Its subcellular location is the cytoplasm. It carries out the reaction tRNA(Asx) + L-aspartate + ATP = L-aspartyl-tRNA(Asx) + AMP + diphosphate. Functionally, aspartyl-tRNA synthetase with relaxed tRNA specificity since it is able to aspartylate not only its cognate tRNA(Asp) but also tRNA(Asn). Reaction proceeds in two steps: L-aspartate is first activated by ATP to form Asp-AMP and then transferred to the acceptor end of tRNA(Asp/Asn). This Oleidesulfovibrio alaskensis (strain ATCC BAA-1058 / DSM 17464 / G20) (Desulfovibrio alaskensis) protein is Aspartate--tRNA(Asp/Asn) ligase.